A 255-amino-acid chain; its full sequence is tRNA (guanine-N(1)-)-methyltransferase (255 aa).

Residues Gly-113 and 133–138 each bind S-adenosyl-L-methionine; that span reads VGDFVL.

The protein belongs to the RNA methyltransferase TrmD family. As to quaternary structure, homodimer.

The protein resides in the cytoplasm. It carries out the reaction guanosine(37) in tRNA + S-adenosyl-L-methionine = N(1)-methylguanosine(37) in tRNA + S-adenosyl-L-homocysteine + H(+). In terms of biological role, specifically methylates guanosine-37 in various tRNAs. The polypeptide is tRNA (guanine-N(1)-)-methyltransferase (Francisella philomiragia subsp. philomiragia (strain ATCC 25017 / CCUG 19701 / FSC 153 / O#319-036)).